We begin with the raw amino-acid sequence, 408 residues long: RNA-splicing ligase RtcB1 (408 aa).

Positions 75, 78, 168, 185, and 281 each coordinate Mn(2+). GMP is bound at residue 167-171 (NHFIE). GMP is bound by residues 281–282 (HN), 313–316 (PGSM), S320, 337–340 (HGAG), and K407. The active-site GMP-histidine intermediate is the H337.

Belongs to the RtcB family. In terms of assembly, monomer. It depends on Mn(2+) as a cofactor.

The catalysed reaction is a 3'-end 3'-phospho-ribonucleotide-RNA + a 5'-end dephospho-ribonucleoside-RNA + GTP = a ribonucleotidyl-ribonucleotide-RNA + GMP + diphosphate. The enzyme catalyses a 3'-end 2',3'-cyclophospho-ribonucleotide-RNA + a 5'-end dephospho-ribonucleoside-RNA + GTP + H2O = a ribonucleotidyl-ribonucleotide-RNA + GMP + diphosphate + H(+). In terms of biological role, GTP-dependent RNA ligase that is involved in RNA repair. Joins RNA with 2',3'-cyclic-phosphate or 3'-phosphate ends to RNA with 5'-hydroxy ends. GTP-dependent RNA ligase that is involved in tRNA repair. Repairs broken tRNA(Asp) and tRNA(Arg) that have been cleaved by colicin E5 or colicin D, respectively. Does not repair damaged 16S rRNA in 30S ribosomal subunits. The polypeptide is RNA-splicing ligase RtcB1 (Escherichia coli (strain ATCC 25922 / DSM 1103 / LMG 8223 / NCIMB 12210 / NCTC 12241 / WDCM 00013 / Seattle 1946)).